Reading from the N-terminus, the 130-residue chain is Holo-[acyl-carrier-protein] synthase (130 aa).

Mg(2+) is bound by residues Asp9 and Glu58.

Belongs to the P-Pant transferase superfamily. AcpS family. Requires Mg(2+) as cofactor.

The protein localises to the cytoplasm. The catalysed reaction is apo-[ACP] + CoA = holo-[ACP] + adenosine 3',5'-bisphosphate + H(+). Transfers the 4'-phosphopantetheine moiety from coenzyme A to a Ser of acyl-carrier-protein. The sequence is that of Holo-[acyl-carrier-protein] synthase from Mycolicibacterium smegmatis (strain ATCC 700084 / mc(2)155) (Mycobacterium smegmatis).